Reading from the N-terminus, the 625-residue chain is Vacuolar-sorting receptor 2 (625 aa).

A signal peptide spans 1-19; the sequence is MRTTNVWLVVIVWVTVGWS. Residues 20–567 lie on the Lumenal side of the membrane; sequence SCTGRFVVEK…INRDARGDFS (548 aa). Residues 55–167 enclose the PA domain; it reads QYGGSMSGAV…SLGSAIKTAI (113 aa). N-linked (GlcNAc...) asparagine glycosylation is found at N147, N293, and N433. EGF-like domains follow at residues 415 to 465 and 468 to 515; these read ETNE…THCE and GALR…KECK. 7 disulfides stabilise this stretch: C419-C437, C426-C446, C448-C464, C472-C492, C479-C500, C502-C514, and C544-C557. One can recognise an EGF-like 3; calcium-binding domain in the interval 516-558; sequence DVNECEEKTACQCRDCKCKNTWGSYECSCSGSLLYIREHDICI. A helical transmembrane segment spans residues 568-588; the sequence is WGVIWIIIMGLGAAALGAYTV. Over 589–625 the chain is Cytoplasmic; sequence YKYRIRTYMDSEIRAIMAQYMPLDNNPNTQLSSQLEL. Residues 608–611 carry the Tyrosine-based internalization motif motif; the sequence is YMPL.

It belongs to the VSR (BP-80) family. As to expression, expressed only in flowers.

It localises to the membrane. The protein resides in the golgi apparatus membrane. Its subcellular location is the cytoplasmic vesicle. The protein localises to the clathrin-coated vesicle membrane. It is found in the prevacuolar compartment membrane. Its function is as follows. Vacuolar-sorting receptor (VSR) involved in clathrin-coated vesicles sorting from Golgi apparatus to vacuoles. This Arabidopsis thaliana (Mouse-ear cress) protein is Vacuolar-sorting receptor 2.